We begin with the raw amino-acid sequence, 149 residues long: D-aminoacyl-tRNA deacylase (149 aa).

The Gly-cisPro motif, important for rejection of L-amino acids signature appears at 137–138 (GP).

This sequence belongs to the DTD family. As to quaternary structure, homodimer.

It is found in the cytoplasm. The catalysed reaction is glycyl-tRNA(Ala) + H2O = tRNA(Ala) + glycine + H(+). It catalyses the reaction a D-aminoacyl-tRNA + H2O = a tRNA + a D-alpha-amino acid + H(+). Functionally, an aminoacyl-tRNA editing enzyme that deacylates mischarged D-aminoacyl-tRNAs. Also deacylates mischarged glycyl-tRNA(Ala), protecting cells against glycine mischarging by AlaRS. Acts via tRNA-based rather than protein-based catalysis; rejects L-amino acids rather than detecting D-amino acids in the active site. By recycling D-aminoacyl-tRNA to D-amino acids and free tRNA molecules, this enzyme counteracts the toxicity associated with the formation of D-aminoacyl-tRNA entities in vivo and helps enforce protein L-homochirality. This is D-aminoacyl-tRNA deacylase from Fervidobacterium nodosum (strain ATCC 35602 / DSM 5306 / Rt17-B1).